Consider the following 1073-residue polypeptide: Probable nuclear hormone receptor HR38 (1073 aa).

Disordered regions lie at residues 55–87 (NLNA…LPPP), 150–185 (TPAP…SNCD), 263–326 (TQTA…LVSP), 437–458 (ALHA…QQHQ), 492–514 (KYNS…APTP), 529–579 (PPLS…NSGG), and 618–640 (GQQQ…NGER). 3 stretches are compositionally biased toward low complexity: residues 59–82 (PTHQ…QQHP), 175–185 (DSNSDSNSNCD), and 263–277 (TQTA…ASAA). Residues 279–291 (HHQHHNHLLHQQH) are compositionally biased toward basic residues. Low complexity-rich tracts occupy residues 292–326 (HNQQ…LVSP), 441–458 (QQQQ…QQHQ), and 495–514 (SSSG…APTP). Residues 619-636 (QQQQQQQQSYQQHNYNSH) show a composition bias toward low complexity. A DNA-binding region (nuclear receptor) is located at residues 741 to 816 (SQLCAVCGDT…VGMVKEVVRT (76 aa)). 2 NR C4-type zinc fingers span residues 744–764 (CAVC…CEGC) and 780–804 (CLAD…FQKC). Residues 819 to 841 (LKGRRGRLPSKPKSPQESPPSPP) are disordered. The region spanning 840–1070 (PPISLITALV…ALIENMFVTT (231 aa)) is the NR LBD domain.

The protein belongs to the nuclear hormone receptor family. NR4 subfamily. As to quaternary structure, forms a heterodimer with USP. In terms of tissue distribution, ubiquitously expressed in preblastoderm embryos, specifically in central nervous system and intestinal tract. Highly expressed in third instar larval imaginal disks and brain complexes, but not in ovaries.

The protein resides in the nucleus. Its function is as follows. Binds to NGFI-B response elements. Plays an important role in late stages of epidermal metamorphosis. This Drosophila melanogaster (Fruit fly) protein is Probable nuclear hormone receptor HR38 (Hr38).